The sequence spans 500 residues: Cytochrome P450 6B4 (500 aa).

C443 contacts heme.

This sequence belongs to the cytochrome P450 family. It depends on heme as a cofactor.

The protein localises to the endoplasmic reticulum membrane. It localises to the microsome membrane. The enzyme catalyses an organic molecule + reduced [NADPH--hemoprotein reductase] + O2 = an alcohol + oxidized [NADPH--hemoprotein reductase] + H2O + H(+). Functionally, enables the insect to feed on furanocoumarin-producing plants and evolved as an adaptation for detoxification of xanthotoxin and other furanocoumarins. This isozyme metabolizes isopimpinellin, imperatorin, and bergapten at high rates, xanthotoxin and psoralen at intermediate rates and angelicin, sphondin, and trioxsalen only at very low rates. This Papilio glaucus (Eastern tiger swallowtail butterfly) protein is Cytochrome P450 6B4 (CYP6B4).